The chain runs to 188 residues: Cell division protein SepF (188 aa).

It belongs to the SepF family. In terms of assembly, homodimer. Interacts with FtsZ.

Its subcellular location is the cytoplasm. In terms of biological role, cell division protein that is part of the divisome complex and is recruited early to the Z-ring. Probably stimulates Z-ring formation, perhaps through the cross-linking of FtsZ protofilaments. Its function overlaps with FtsA. The sequence is that of Cell division protein SepF from Synechococcus sp. (strain CC9605).